A 260-amino-acid chain; its full sequence is Hydroxyethylthiazole kinase (260 aa).

M36 contributes to the substrate binding site. The ATP site is built by R112 and T157. Position 184 (G184) interacts with substrate.

Belongs to the Thz kinase family. It depends on Mg(2+) as a cofactor.

The enzyme catalyses 5-(2-hydroxyethyl)-4-methylthiazole + ATP = 4-methyl-5-(2-phosphooxyethyl)-thiazole + ADP + H(+). Its pathway is cofactor biosynthesis; thiamine diphosphate biosynthesis; 4-methyl-5-(2-phosphoethyl)-thiazole from 5-(2-hydroxyethyl)-4-methylthiazole: step 1/1. Its function is as follows. Catalyzes the phosphorylation of the hydroxyl group of 4-methyl-5-beta-hydroxyethylthiazole (THZ). This Shouchella clausii (strain KSM-K16) (Alkalihalobacillus clausii) protein is Hydroxyethylthiazole kinase.